We begin with the raw amino-acid sequence, 352 residues long: Dead end protein homolog 1 (352 aa).

RRM domains are found at residues 58-136 and 138-218; these read SEVY…RSTE and CELT…WLKP. Residue arginine 336 is modified to Omega-N-methylarginine.

Interacts with APOBEC3. In terms of tissue distribution, isoform 1 and isoform 2 are expressed in testis. Isoform 1 is expressed continuously in post natal (PN) testis although levels are low between PN1 to PN6. Isoform 2 is expressed from PN 20 onwards. Isoform 2 is strongly expressed in meiotic and in post-meiotic germ cells of the testis with highest expression at the elongated spermatid stage (at protein level). Expressed in testis and heart. Expressed in germ cells and genital ridges. Not detected in testicular tumors.

It is found in the nucleus. The protein resides in the cytoplasm. Functionally, RNA-binding factor that positively regulates gene expression by prohibiting miRNA-mediated gene suppression. Relieves miRNA repression in germline cells. Prohibits the function of several miRNAs by blocking the accessibility of target mRNAs. Sequence-specific RNA-binding factor that binds specifically to U-rich regions (URRs) in the 3' untranslated region (3'-UTR) of several mRNAs. Does not bind to miRNAs. Isoform 1 may play a role during primordial germ cell (PGC) survival. However, does not seem to be essential for PGC migration. The chain is Dead end protein homolog 1 (Dnd1) from Mus musculus (Mouse).